The chain runs to 287 residues: Bifunctional protein FolD (287 aa).

NADP(+)-binding positions include 166-168 (GAS) and Ile-232.

It belongs to the tetrahydrofolate dehydrogenase/cyclohydrolase family. As to quaternary structure, homodimer.

It carries out the reaction (6R)-5,10-methylene-5,6,7,8-tetrahydrofolate + NADP(+) = (6R)-5,10-methenyltetrahydrofolate + NADPH. The catalysed reaction is (6R)-5,10-methenyltetrahydrofolate + H2O = (6R)-10-formyltetrahydrofolate + H(+). It participates in one-carbon metabolism; tetrahydrofolate interconversion. Functionally, catalyzes the oxidation of 5,10-methylenetetrahydrofolate to 5,10-methenyltetrahydrofolate and then the hydrolysis of 5,10-methenyltetrahydrofolate to 10-formyltetrahydrofolate. The sequence is that of Bifunctional protein FolD from Pectobacterium carotovorum subsp. carotovorum (strain PC1).